The following is a 155-amino-acid chain: MASATTSDHAKQAGGAHSRQRDSGLLDQLGKLFGQEGSRKVPEKGKEPATRSVLMAPTTHKAHQGARRQTDDSPVVHFFKNMMSPKKAPVQQKAKSGASRAITKFIWGTDGQRAHYGAAGSSKSKDGFRGRRDGSGTLSSFFKMGKKGEGSPARR.

The tract at residues 1-72 (MASATTSDHA…HQGARRQTDD (72 aa)) is disordered. The residue at position 2 (A2) is an N-acetylalanine; in forms C1, C2, C3 and C8. Q12 is subject to Deamidated glutamine; in forms C1, C2 and C3. Over residues 37-49 (GSRKVPEKGKEPA) the composition is skewed to basic and acidic residues. 2 positions are modified to phosphoserine; in forms C1, C2 and C3: S73 and S84. Positions 113-155 (RAHYGAAGSSKSKDGFRGRRDGSGTLSSFFKMGKKGEGSPARR) are disordered. Phosphoserine; in forms C1 and C3 occurs at positions 121 and 122. The segment covering 123 to 134 (KSKDGFRGRRDG) has biased composition (basic and acidic residues). Residues S135, S139, and S140 each carry the phosphoserine; in forms C1, C2 and C3 modification.

Belongs to the myelin basic protein family. Post-translationally, several charge isomers are produced as a result of optional post-translational modifications, such as phosphorylation, deamidation and citrullination. Dogfish MBP contains four major components designated as C1, C2, C3 and C8. C1 and C3, but not C2 are phosphorylated at either Ser-121 or Ser-122; C2 is phosphorylated at 2 or 3 sites among Ser-135, Ser-139 and Ser-140. Hydroxyproline and citrulline are present but were not identified in either C1, C2 or C3, which suggests their presence in C8.

The protein resides in the myelin membrane. This protein may function to maintain proper structure of myelin. In Squalus acanthias (Spiny dogfish), this protein is Myelin basic protein (MBP).